The following is a 293-amino-acid chain: Phosphatidylglycerol--prolipoprotein diacylglyceryl transferase (293 aa).

4 helical membrane-spanning segments follow: residues 4–24 (ILAFLSIAAGSTLFFVFLFIF), 45–65 (FELRWYSTLILTGFLISYFVA), 81–101 (ELIFYGVIAGIVGARLYYVLF), and 115–135 (IWEGGLAIHGAVIGALLTGFL). R165 is an a 1,2-diacyl-sn-glycero-3-phospho-(1'-sn-glycerol) binding site. 3 consecutive transmembrane segments (helical) span residues 204–224 (PTFLYESIWDLLVFFMLSVYF), 231–249 (HGEVTCLYFVLYSLGRIVI), and 262–282 (IKAAQLLSAVLILLGFTGFLI).

It belongs to the Lgt family.

Its subcellular location is the cell inner membrane. It carries out the reaction L-cysteinyl-[prolipoprotein] + a 1,2-diacyl-sn-glycero-3-phospho-(1'-sn-glycerol) = an S-1,2-diacyl-sn-glyceryl-L-cysteinyl-[prolipoprotein] + sn-glycerol 1-phosphate + H(+). The protein operates within protein modification; lipoprotein biosynthesis (diacylglyceryl transfer). Catalyzes the transfer of the diacylglyceryl group from phosphatidylglycerol to the sulfhydryl group of the N-terminal cysteine of a prolipoprotein, the first step in the formation of mature lipoproteins. This Thermotoga petrophila (strain ATCC BAA-488 / DSM 13995 / JCM 10881 / RKU-1) protein is Phosphatidylglycerol--prolipoprotein diacylglyceryl transferase.